The following is a 122-amino-acid chain: Large ribosomal subunit protein uL14 (122 aa).

This sequence belongs to the universal ribosomal protein uL14 family. In terms of assembly, part of the 50S ribosomal subunit. Forms a cluster with proteins L3 and L19. In the 70S ribosome, L14 and L19 interact and together make contacts with the 16S rRNA in bridges B5 and B8.

Functionally, binds to 23S rRNA. Forms part of two intersubunit bridges in the 70S ribosome. The chain is Large ribosomal subunit protein uL14 from Burkholderia multivorans (strain ATCC 17616 / 249).